A 608-amino-acid polypeptide reads, in one-letter code: Dolichyl-diphosphooligosaccharide--protein glycosyltransferase subunit 1 (608 aa).

The signal sequence occupies residues Met1–Arg24. The Lumenal portion of the chain corresponds to Ala25–Leu435. Position 188 is an N6-acetyllysine (Lys188). Asn300 is a glycosylation site (N-linked (GlcNAc...) asparagine). A helical transmembrane segment spans residues Met436–Val456. At Tyr457 to Ala607 the chain is on the cytoplasmic side. Residue Lys539 is modified to N6-acetyllysine; alternate. Lys539 participates in a covalent cross-link: Glycyl lysine isopeptide (Lys-Gly) (interchain with G-Cter in SUMO2); alternate.

It belongs to the OST1 family. As to quaternary structure, component of the oligosaccharyltransferase (OST) complex. OST exists in two different complex forms which contain common core subunits RPN1, RPN2, OST48, OST4, DAD1 and TMEM258, either STT3A or STT3B as catalytic subunits, and form-specific accessory subunits. STT3A complex assembly occurs through the formation of 3 subcomplexes. Subcomplex 1 contains RPN1 and TMEM258, subcomplex 2 contains the STT3A-specific subunits STT3A, DC2/OSTC, and KCP2 as well as the core subunit OST4, and subcomplex 3 contains RPN2, DAD1, and OST48. The STT3A complex can form stable complexes with the Sec61 complex or with both the Sec61 and TRAP complexes. Interacts with TMEM35A/NACHO. In terms of processing, ubiquitinated by the ECS(ASB11) complex. Ufmylated by UFL1 in response to endoplasmic reticulum stress, promoting reticulophagy of endoplasmic reticulum sheets. In terms of tissue distribution, detected in liver (at protein level).

Its subcellular location is the endoplasmic reticulum membrane. It participates in protein modification; protein glycosylation. In terms of biological role, subunit of the oligosaccharyl transferase (OST) complex that catalyzes the initial transfer of a defined glycan (Glc(3)Man(9)GlcNAc(2) in eukaryotes) from the lipid carrier dolichol-pyrophosphate to an asparagine residue within an Asn-X-Ser/Thr consensus motif in nascent polypeptide chains, the first step in protein N-glycosylation. N-glycosylation occurs cotranslationally and the complex associates with the Sec61 complex at the channel-forming translocon complex that mediates protein translocation across the endoplasmic reticulum (ER). All subunits are required for a maximal enzyme activity. The sequence is that of Dolichyl-diphosphooligosaccharide--protein glycosyltransferase subunit 1 from Sus scrofa (Pig).